Here is a 264-residue protein sequence, read N- to C-terminus: Hydroxyethylthiazole kinase (264 aa).

Substrate is bound at residue Met52. Residues Arg127 and Thr173 each coordinate ATP. Gly200 lines the substrate pocket.

The protein belongs to the Thz kinase family. Requires Mg(2+) as cofactor.

The catalysed reaction is 5-(2-hydroxyethyl)-4-methylthiazole + ATP = 4-methyl-5-(2-phosphooxyethyl)-thiazole + ADP + H(+). The protein operates within cofactor biosynthesis; thiamine diphosphate biosynthesis; 4-methyl-5-(2-phosphoethyl)-thiazole from 5-(2-hydroxyethyl)-4-methylthiazole: step 1/1. In terms of biological role, catalyzes the phosphorylation of the hydroxyl group of 4-methyl-5-beta-hydroxyethylthiazole (THZ). The sequence is that of Hydroxyethylthiazole kinase from Serratia proteamaculans (strain 568).